Reading from the N-terminus, the 176-residue chain is ATP-dependent protease subunit HslV (176 aa).

Threonine 2 is a catalytic residue. Residues glycine 157, cysteine 160, and threonine 163 each coordinate Na(+).

This sequence belongs to the peptidase T1B family. HslV subfamily. In terms of assembly, a double ring-shaped homohexamer of HslV is capped on each side by a ring-shaped HslU homohexamer. The assembly of the HslU/HslV complex is dependent on binding of ATP.

It is found in the cytoplasm. It catalyses the reaction ATP-dependent cleavage of peptide bonds with broad specificity.. With respect to regulation, allosterically activated by HslU binding. Its function is as follows. Protease subunit of a proteasome-like degradation complex believed to be a general protein degrading machinery. The polypeptide is ATP-dependent protease subunit HslV (Pseudomonas syringae pv. tomato (strain ATCC BAA-871 / DC3000)).